The chain runs to 206 residues: Small ribosomal subunit protein uS4 (206 aa).

Residues 18–45 form a disordered region; it reads NIWGRPKSPVNRREYGPGQHGQRRKGKM. The 64-residue stretch at 94 to 157 folds into the S4 RNA-binding domain; the sequence is RRLDAVVYRA…KQLASVLEAV (64 aa).

The protein belongs to the universal ribosomal protein uS4 family. Part of the 30S ribosomal subunit. Contacts protein S5. The interaction surface between S4 and S5 is involved in control of translational fidelity.

Its function is as follows. One of the primary rRNA binding proteins, it binds directly to 16S rRNA where it nucleates assembly of the body of the 30S subunit. With S5 and S12 plays an important role in translational accuracy. The sequence is that of Small ribosomal subunit protein uS4 from Ruegeria pomeroyi (strain ATCC 700808 / DSM 15171 / DSS-3) (Silicibacter pomeroyi).